Consider the following 444-residue polypeptide: tRNA modification GTPase MnmE (444 aa).

(6S)-5-formyl-5,6,7,8-tetrahydrofolate is bound by residues R23, E82, and K121. The TrmE-type G domain maps to 216–365 (GTSIVLAGLP…LKQALQKWLN (150 aa)). Residue N226 participates in K(+) binding. Residues 226 to 231 (NAGKSS), 245 to 251 (TDIPGTT), and 270 to 273 (DSAG) contribute to the GTP site. S230 provides a ligand contact to Mg(2+). Positions 245, 247, and 250 each coordinate K(+). Residue T251 participates in Mg(2+) binding. Position 444 (K444) interacts with (6S)-5-formyl-5,6,7,8-tetrahydrofolate.

The protein belongs to the TRAFAC class TrmE-Era-EngA-EngB-Septin-like GTPase superfamily. TrmE GTPase family. Homodimer. Heterotetramer of two MnmE and two MnmG subunits. The cofactor is K(+).

The protein resides in the cytoplasm. In terms of biological role, exhibits a very high intrinsic GTPase hydrolysis rate. Involved in the addition of a carboxymethylaminomethyl (cmnm) group at the wobble position (U34) of certain tRNAs, forming tRNA-cmnm(5)s(2)U34. In Chlamydia trachomatis serovar A (strain ATCC VR-571B / DSM 19440 / HAR-13), this protein is tRNA modification GTPase MnmE.